The following is a 780-amino-acid chain: Molybdenum cofactor sulfurase (780 aa).

An N6-(pyridoxal phosphate)lysine modification is found at Lys246. The active site involves Cys413. The 146-residue stretch at 635–780 (LRLLRQSGQR…MTCGDVVLVE (146 aa)) folds into the MOSC domain. Ser734 carries the post-translational modification Phosphoserine.

This sequence belongs to the class-V pyridoxal-phosphate-dependent aminotransferase family. MOCOS subfamily. Pyridoxal 5'-phosphate serves as cofactor.

The enzyme catalyses Mo-molybdopterin + L-cysteine + AH2 = thio-Mo-molybdopterin + L-alanine + A + H2O. Sulfurates the molybdenum cofactor. Sulfation of molybdenum is essential for xanthine dehydrogenase (XDH) and aldehyde oxidase (ADO) enzymes in which molybdenum cofactor is liganded by 1 oxygen and 1 sulfur atom in active form. The chain is Molybdenum cofactor sulfurase from Drosophila yakuba (Fruit fly).